A 365-amino-acid chain; its full sequence is Flagellar P-ring protein (365 aa).

The first 19 residues, 1–19, serve as a signal peptide directing secretion; that stretch reads MFKALAGIVLALVATLAHA.

Belongs to the FlgI family. As to quaternary structure, the basal body constitutes a major portion of the flagellar organelle and consists of four rings (L,P,S, and M) mounted on a central rod.

It is found in the periplasm. The protein resides in the bacterial flagellum basal body. In terms of biological role, assembles around the rod to form the L-ring and probably protects the motor/basal body from shearing forces during rotation. In Salmonella heidelberg (strain SL476), this protein is Flagellar P-ring protein.